The sequence spans 230 residues: MAGKENNFPPLPHFLPLKPCFYQDFSDEIPVEHQVLVKRIYRLWMFYCTTLGVNLVACLAWWIAGGAGANFGLAMLWLVLFTPCSYVCWFRPAYKAFRADSSFNFMAFFFIFGAQFVLTVIQAIGFSGWGACGWLATIGFFGTSVGAAVVMLIPAIMFSLSAVVMAITIVKVHRIYRGAGGSLQKAQTEWSAGTWRNPPSREAQFNSFSGNSLPEYPTVPSYSTSGSQWP.

The Cytoplasmic segment spans residues 1–39; it reads MAGKENNFPPLPHFLPLKPCFYQDFSDEIPVEHQVLVKR. 4 helical membrane passes run 40 to 60, 61 to 81, 106 to 126, and 149 to 169; these read IYRL…ACLA, WWIA…LVLF, MAFF…AIGF, and VVML…AITI. Residues 170-230 lie on the Cytoplasmic side of the membrane; it reads VKVHRIYRGA…SYSTSGSQWP (61 aa). Threonine 194 carries the phosphothreonine modification. The tract at residues 197-230 is disordered; that stretch reads NPPSREAQFNSFSGNSLPEYPTVPSYSTSGSQWP. 2 stretches are compositionally biased toward polar residues: residues 203–212 and 220–230; these read AQFNSFSGNS and PSYSTSGSQWP.

This sequence belongs to the SCAMP family.

It is found in the membrane. Functionally, probably involved in membrane protein trafficking. The sequence is that of Secretory carrier-associated membrane protein 4 (Scamp4) from Rattus norvegicus (Rat).